Here is a 586-residue protein sequence, read N- to C-terminus: ATPase family AAA domain-containing protein 3 (586 aa).

The tract at residues 1-52 (MSWLFGIKGSKGEGTGPPLPLPPVQPGGEGSGDGGAGDRPGPKDKWSNFDPT) is disordered. Residue Ser-2 is modified to N-acetylserine. Residues 2-49 (SWLFGIKGSKGEGTGPPLPLPPVQPGGEGSGDGGAGDRPGPKDKWSNF) are required for interaction with the inner surface of the mitochondrial outer membrane. Over 2–245 (SWLFGIKGSK…FRAFVTDWDK (244 aa)) the chain is Mitochondrial intermembrane. Residues 27-38 (GGEGSGDGGAGD) show a composition bias toward gly residues. Residues 55–218 (ERAAKAAREL…QIRLKAAEHR (164 aa)) adopt a coiled-coil conformation. Residues 246–262 (VTATVAGLTLLAVGIYS) traverse the membrane as a helical segment. Residues 263-586 (AKNATSVAGR…QPPTLRTQAE (324 aa)) are Mitochondrial matrix-facing. The segment at 289–304 (RITVLEALRHPIQVSR) is S100B-binding. 351-358 (GPPGTGKT) provides a ligand contact to ATP. N6-acetyllysine; alternate is present on Lys-490. Lys-490 is modified (N6-succinyllysine; alternate). An N6-acetyllysine mark is found at Lys-494 and Lys-512.

It belongs to the AAA ATPase family. Can form homooligomers. Homodimer formation at the N-terminus may be regulated by ATP and is required for the interaction with the inner surface of the mitochondrial outer membrane and correct mitochondrial homeostasis. Interacts with components of the mitochondrial ribosome and with other proteins involved in mitochondrial RNA metabolism. May also interact with protein involved in lipid metabolism, including STARD9. May interact with FAM210A. Interacts with GADD45GIP1. Interacts with S100B in a Ca(+2)- and Zn(+2)-dependent manner; this interaction probably occurs in the cytosol prior to mitochondrial targeting. S100B could assist ATAD3A cytoplasmic processing, preventing aggregation and favoring mitochondrial localization. Interacts with HSP60/HSPD1. Forms heterooligomers with ATAD3B; this interaction may affect ATAD3A activity. Interacts with CLPB.

It localises to the mitochondrion inner membrane. Its subcellular location is the mitochondrion matrix. The protein localises to the mitochondrion nucleoid. Functionally, essential for mitochondrial network organization, mitochondrial metabolism and cell growth at organism and cellular level. May play an important role in mitochondrial protein synthesis. May also participate in mitochondrial DNA replication. May bind to mitochondrial DNA D-loops and contribute to nucleoid stability. Required for enhanced channeling of cholesterol for hormone-dependent steroidogenesis. Involved in mitochondrial-mediated antiviral innate immunity. Also involved in the mitochondrial DNA damage response by promoting signaling between damaged genomes and the mitochondrial membrane, leading to activation of the integrated stress response (ISR). This Bos taurus (Bovine) protein is ATPase family AAA domain-containing protein 3 (ATAD3).